The primary structure comprises 689 residues: Glycine--tRNA ligase beta subunit (689 aa).

The protein belongs to the class-II aminoacyl-tRNA synthetase family. As to quaternary structure, tetramer of two alpha and two beta subunits.

It localises to the cytoplasm. It carries out the reaction tRNA(Gly) + glycine + ATP = glycyl-tRNA(Gly) + AMP + diphosphate. The sequence is that of Glycine--tRNA ligase beta subunit from Escherichia coli O127:H6 (strain E2348/69 / EPEC).